The primary structure comprises 299 residues: MALTHLQQLEAESIKIMREVAAEFENPVMLYSIGKDSSVLLHLARKAFYPAKIPFPLLHVDTNWKFSEMIEFRDRIAKEYGFELLVHKNPEGMEIGISPFEHGSGKHTDIMKTQGLKQALDKYGFDAAFGGARRDEEKSRAKERVYSFRDKHHRWDPKNQRPELWNTYNSQVNPGESIRVFPLSNWTELDIWQYIYQENIDMVPLYLAKERPVVDRDGTLIMVDDERMPLLEGEVPMMKSVRFRTLGCYPLTGAVESTASSLTEIIEEMLLSTSSEREGRVIDHDSAGSMEKKKREGYF.

The interval 276-299 is disordered; sequence EREGRVIDHDSAGSMEKKKREGYF.

It belongs to the PAPS reductase family. CysD subfamily. Heterodimer composed of CysD, the smaller subunit, and CysN.

It catalyses the reaction sulfate + ATP + H(+) = adenosine 5'-phosphosulfate + diphosphate. It participates in sulfur metabolism; hydrogen sulfide biosynthesis; sulfite from sulfate: step 1/3. In terms of biological role, with CysN forms the ATP sulfurylase (ATPS) that catalyzes the adenylation of sulfate producing adenosine 5'-phosphosulfate (APS) and diphosphate, the first enzymatic step in sulfur assimilation pathway. APS synthesis involves the formation of a high-energy phosphoric-sulfuric acid anhydride bond driven by GTP hydrolysis by CysN coupled to ATP hydrolysis by CysD. The chain is Sulfate adenylyltransferase subunit 2 from Pseudoalteromonas translucida (strain TAC 125).